Here is a 455-residue protein sequence, read N- to C-terminus: Bifunctional protein GlmU (455 aa).

Positions 1 to 226 (MIAVAILAAG…YQEILGINDR (226 aa)) are pyrophosphorylase. Residues 7–10 (LAAG), Lys21, Gln73, and 78–79 (GT) contribute to the UDP-N-acetyl-alpha-D-glucosamine site. Asp103 is a Mg(2+) binding site. UDP-N-acetyl-alpha-D-glucosamine-binding residues include Gly140, Glu155, Asn170, and Asn224. A Mg(2+)-binding site is contributed by Asn224. The interval 227–247 (KQLATAYKILQDRIKDDWLVA) is linker. An N-acetyltransferase region spans residues 248 to 455 (GVTIMDPDSI…RPISSKQTEK (208 aa)). Positions 329 and 347 each coordinate UDP-N-acetyl-alpha-D-glucosamine. Catalysis depends on His359, which acts as the Proton acceptor. Positions 362 and 373 each coordinate UDP-N-acetyl-alpha-D-glucosamine. Residues Ala376, 382–383 (NY), Ala419, and Arg436 each bind acetyl-CoA.

This sequence in the N-terminal section; belongs to the N-acetylglucosamine-1-phosphate uridyltransferase family. In the C-terminal section; belongs to the transferase hexapeptide repeat family. Homotrimer. It depends on Mg(2+) as a cofactor.

It is found in the cytoplasm. The catalysed reaction is alpha-D-glucosamine 1-phosphate + acetyl-CoA = N-acetyl-alpha-D-glucosamine 1-phosphate + CoA + H(+). The enzyme catalyses N-acetyl-alpha-D-glucosamine 1-phosphate + UTP + H(+) = UDP-N-acetyl-alpha-D-glucosamine + diphosphate. Its pathway is nucleotide-sugar biosynthesis; UDP-N-acetyl-alpha-D-glucosamine biosynthesis; N-acetyl-alpha-D-glucosamine 1-phosphate from alpha-D-glucosamine 6-phosphate (route II): step 2/2. It functions in the pathway nucleotide-sugar biosynthesis; UDP-N-acetyl-alpha-D-glucosamine biosynthesis; UDP-N-acetyl-alpha-D-glucosamine from N-acetyl-alpha-D-glucosamine 1-phosphate: step 1/1. The protein operates within bacterial outer membrane biogenesis; LPS lipid A biosynthesis. In terms of biological role, catalyzes the last two sequential reactions in the de novo biosynthetic pathway for UDP-N-acetylglucosamine (UDP-GlcNAc). The C-terminal domain catalyzes the transfer of acetyl group from acetyl coenzyme A to glucosamine-1-phosphate (GlcN-1-P) to produce N-acetylglucosamine-1-phosphate (GlcNAc-1-P), which is converted into UDP-GlcNAc by the transfer of uridine 5-monophosphate (from uridine 5-triphosphate), a reaction catalyzed by the N-terminal domain. The chain is Bifunctional protein GlmU from Acaryochloris marina (strain MBIC 11017).